A 485-amino-acid chain; its full sequence is Protein nucleotidyltransferase YdiU (485 aa).

Positions 90, 92, 93, 113, 125, 126, 176, and 183 each coordinate ATP. Residue aspartate 252 is the Proton acceptor of the active site. Asparagine 253 and aspartate 262 together coordinate Mg(2+). Aspartate 262 provides a ligand contact to ATP.

The protein belongs to the SELO family. Requires Mg(2+) as cofactor. Mn(2+) serves as cofactor.

It catalyses the reaction L-seryl-[protein] + ATP = 3-O-(5'-adenylyl)-L-seryl-[protein] + diphosphate. It carries out the reaction L-threonyl-[protein] + ATP = 3-O-(5'-adenylyl)-L-threonyl-[protein] + diphosphate. The catalysed reaction is L-tyrosyl-[protein] + ATP = O-(5'-adenylyl)-L-tyrosyl-[protein] + diphosphate. The enzyme catalyses L-histidyl-[protein] + UTP = N(tele)-(5'-uridylyl)-L-histidyl-[protein] + diphosphate. It catalyses the reaction L-seryl-[protein] + UTP = O-(5'-uridylyl)-L-seryl-[protein] + diphosphate. It carries out the reaction L-tyrosyl-[protein] + UTP = O-(5'-uridylyl)-L-tyrosyl-[protein] + diphosphate. Its function is as follows. Nucleotidyltransferase involved in the post-translational modification of proteins. It can catalyze the addition of adenosine monophosphate (AMP) or uridine monophosphate (UMP) to a protein, resulting in modifications known as AMPylation and UMPylation. This is Protein nucleotidyltransferase YdiU from Aliivibrio fischeri (strain ATCC 700601 / ES114) (Vibrio fischeri).